A 443-amino-acid chain; its full sequence is MRQFEDYVLESFDHTTGWYQDNSYESLNRTADQLMQFRLPTGLKLSFSSLATPNFSTSYHLGAGGRFDGSICYLFSSVPLKNVVSSSESIPLTALLRSYRQVQDLPPFQPSHGAVPPAPTPTPGERLQEFVKQPWLVFGRMFLPESMLEAQVVKRASPNLRFQVKGVSQADLPNGGTILGSVQYTKPRYGVAGLLSTDGGLLGFRGLYNFGGDTTPTTSSPRAVGGDENGGANGCDERERIYGRFSAGGELYYGVLNKSAGASLGVRFATLPAHSGTPLTATFTLAPLMGNISSSFAVMARQSCSLATRFDFNVYSYESDWTIGMELWGKGRMAGLIDRRLEEEEAQIVPVDMGPAEKKRERSFQAKMEWRLDEDDETEPPLPNKREEEFSGVLKARMDQHSKVGLLWEGRLKSLIFSLGTSVNLSKPEQSFRSLGLAIQYSS.

Belongs to the MDM10 family. Component of the ER-mitochondria encounter structure (ERMES) or MDM complex, composed of MMM1, MDM10, MDM12 and MDM34. Associates with the mitochondrial outer membrane sorting assembly machinery SAM(core) complex.

Its subcellular location is the mitochondrion outer membrane. Functionally, component of the ERMES/MDM complex, which serves as a molecular tether to connect the endoplasmic reticulum and mitochondria. Components of this complex are involved in the control of mitochondrial shape and protein biogenesis and may function in phospholipid exchange. MDM10 is involved in the late assembly steps of the general translocase of the mitochondrial outer membrane (TOM complex). Functions in the TOM40-specific route of the assembly of outer membrane beta-barrel proteins, including the association of TOM40 with the receptor TOM22 and small TOM proteins. Can associate with the SAM(core) complex as well as the MDM12-MMM1 complex, both involved in late steps of the major beta-barrel assembly pathway, that is responsible for biogenesis of all outer membrane beta-barrel proteins. May act as a switch that shuttles between both complexes and channels precursor proteins into the TOM40-specific pathway. Plays a role in mitochondrial morphology and in the inheritance of mitochondria. This Pyricularia oryzae (strain 70-15 / ATCC MYA-4617 / FGSC 8958) (Rice blast fungus) protein is Mitochondrial distribution and morphology protein 10.